A 125-amino-acid polypeptide reads, in one-letter code: Alpha-endosulfine (125 aa).

The span at Met-1–Leu-37 shows a compositional bias: basic and acidic residues. Positions Met-1–Phe-53 are disordered. Thr-28 bears the Phosphothreonine; by CDK2 mark. Phosphoserine; by GWL is present on Ser-67. Residues Gln-81 to Ser-108 are disordered. Thr-99 carries the phosphothreonine; by CDK2 modification. Ser-109 is modified (phosphoserine; by PKA).

The protein belongs to the endosulfine family. Phosphorylation at Ser-67 by gwl during mitosis is essential for interaction with ppp2r2d (PR55-delta) and subsequent inactivation of PP2A.

The protein localises to the cytoplasm. Protein phosphatase inhibitor that specifically inhibits protein phosphatase 2A (PP2A) during mitosis. When phosphorylated at Ser-67 during mitosis, specifically interacts with ppp2r2d (PR55-delta) and inhibits its activity, leading to inactivation of PP2A, an essential condition to keep cyclin-B1-CDK1 activity high during M phase. The protein is Alpha-endosulfine (ensa) of Xenopus tropicalis (Western clawed frog).